A 1185-amino-acid polypeptide reads, in one-letter code: Ubiquitin carboxyl-terminal hydrolase 36 (1185 aa).

Over residues threonine 126–asparagine 169 the composition is skewed to polar residues. The segment at threonine 126–proline 174 is disordered. The region spanning alanine 199–aspartate 509 is the USP domain. The active-site Nucleophile is cysteine 208. Histidine 468 serves as the catalytic Proton acceptor. Residues serine 552 and serine 554 each carry the phosphoserine modification. The span at alanine 642 to serine 658 shows a compositional bias: low complexity. Disordered stretches follow at residues alanine 642–isoleucine 804, histidine 818–glutamate 975, alanine 1056–proline 1122, and asparagine 1136–serine 1185. The segment covering serine 670–valine 683 has biased composition (acidic residues). Position 716 is a phosphothreonine (threonine 716). Serine 726 and serine 728 each carry phosphoserine. Low complexity-rich tracts occupy residues lysine 778–asparagine 797 and glutamine 836–serine 853. Residue serine 867 is modified to Phosphoserine. The residue at position 870 (threonine 870) is a Phosphothreonine. Serine 873 is subject to Phosphoserine. A compositionally biased stretch (acidic residues) spans aspartate 891–valine 920. Polar residues-rich tracts occupy residues threonine 924–serine 942 and serine 959–glutamate 975. The residue at position 925 (threonine 925) is a Phosphothreonine. The segment covering glutamate 1062–alanine 1071 has biased composition (basic and acidic residues). Low complexity-rich tracts occupy residues glutamine 1151–alanine 1161 and glutamine 1172–serine 1185.

Belongs to the peptidase C19 family. Interacts with atms/PAF1, but not with CycT.

The protein resides in the nucleus. Its subcellular location is the nucleolus. The catalysed reaction is Thiol-dependent hydrolysis of ester, thioester, amide, peptide and isopeptide bonds formed by the C-terminal Gly of ubiquitin (a 76-residue protein attached to proteins as an intracellular targeting signal).. Required for maintaining multiple types of adult stem cells, including male and female germline, epithelial follicle cell and intestinal stem cells. May function as a transcriptional repressor by continually deubiquiting histone H2B at the promoters of genes critical for cellular differentiation, thereby preventing histone H3 'Lys-4' trimethylation (H3K4). Controls selective autophagy activation by ubiquitinated proteins. This chain is Ubiquitin carboxyl-terminal hydrolase 36 (Usp36), found in Drosophila mojavensis (Fruit fly).